Reading from the N-terminus, the 380-residue chain is Chaperone protein DnaJ (380 aa).

The J domain occupies Asp-5–Gly-70. The segment at Gly-137–Glu-215 adopts a CR-type zinc-finger fold. Zn(2+) contacts are provided by Cys-150, Cys-153, Cys-167, Cys-170, Cys-189, Cys-192, Cys-203, and Cys-206. CXXCXGXG motif repeat units follow at residues Cys-150–Gly-157, Cys-167–Gly-174, Cys-189–Gly-196, and Cys-203–Gly-210.

It belongs to the DnaJ family. Homodimer. Zn(2+) is required as a cofactor.

It is found in the cytoplasm. Its function is as follows. Participates actively in the response to hyperosmotic and heat shock by preventing the aggregation of stress-denatured proteins and by disaggregating proteins, also in an autonomous, DnaK-independent fashion. Unfolded proteins bind initially to DnaJ; upon interaction with the DnaJ-bound protein, DnaK hydrolyzes its bound ATP, resulting in the formation of a stable complex. GrpE releases ADP from DnaK; ATP binding to DnaK triggers the release of the substrate protein, thus completing the reaction cycle. Several rounds of ATP-dependent interactions between DnaJ, DnaK and GrpE are required for fully efficient folding. Also involved, together with DnaK and GrpE, in the DNA replication of plasmids through activation of initiation proteins. This chain is Chaperone protein DnaJ, found in Methylobacterium radiotolerans (strain ATCC 27329 / DSM 1819 / JCM 2831 / NBRC 15690 / NCIMB 10815 / 0-1).